Reading from the N-terminus, the 311-residue chain is MNAYSYMLIKNPDVNFEGITINGYVDLPGRIVQDQKNARSHAVTWDTKVKKQLLDTLNGIVEYDTTFDNYYETMVEAINTGDGETLKEGITDLRGEIQQNQKYAQQLIEELTKLRDSIGHDVRAFGSNKELLQSILKNQGADVDADQKRLEEVLGSVNYYKQLESDGFNVMKGAILGLPIIGGIIVGVARDNLGKLEPLLAELRQTVDYKVTLNRVVGVAYSNINEIDKALDDAINALTYMSTQWHDLDSQYSGVLGHIENAAQKADQNKFKFLKPNLNAAKDSWKTLRTDAVTLKEGIKELKVETVTPQK.

Residues 168–188 (FNVMKGAILGLPIIGGIIVGV) traverse the membrane as a helical segment.

It is found in the cell membrane. This is an uncharacterized protein from Edwardsiella tarda.